Consider the following 421-residue polypeptide: Gamma-glutamyl phosphate reductase (421 aa).

It belongs to the gamma-glutamyl phosphate reductase family.

It is found in the cytoplasm. The catalysed reaction is L-glutamate 5-semialdehyde + phosphate + NADP(+) = L-glutamyl 5-phosphate + NADPH + H(+). It functions in the pathway amino-acid biosynthesis; L-proline biosynthesis; L-glutamate 5-semialdehyde from L-glutamate: step 2/2. Catalyzes the NADPH-dependent reduction of L-glutamate 5-phosphate into L-glutamate 5-semialdehyde and phosphate. The product spontaneously undergoes cyclization to form 1-pyrroline-5-carboxylate. This is Gamma-glutamyl phosphate reductase from Acinetobacter baumannii (strain SDF).